The primary structure comprises 725 residues: uncharacterized protein (725 aa).

Residues 363–556 (GTYVEIPLYS…FVTTRPEDSC (194 aa)) enclose the FtsK domain. 382–389 (GRTRGGKS) is an ATP binding site.

Belongs to the FtsK/SpoIIIE/SftA family.

Functionally, probable DNA motor protein. May track DNA in a ATP-dependent manner by generating positive supercoils in front of it and negative supercoils behind it. This is an uncharacterized protein from Nostoc sp. (strain PCC 7120 / SAG 25.82 / UTEX 2576).